The chain runs to 247 residues: 2,3-bisphosphoglycerate-dependent phosphoglycerate mutase (247 aa).

Substrate-binding positions include 8 to 15, 21 to 22, Arg60, 87 to 90, Lys98, 114 to 115, and 183 to 184; these read RHGESQWN, TG, ERHY, RR, and GN. The active-site Tele-phosphohistidine intermediate is the His9. Glu87 acts as the Proton donor/acceptor in catalysis.

This sequence belongs to the phosphoglycerate mutase family. BPG-dependent PGAM subfamily.

It catalyses the reaction (2R)-2-phosphoglycerate = (2R)-3-phosphoglycerate. It participates in carbohydrate degradation; glycolysis; pyruvate from D-glyceraldehyde 3-phosphate: step 3/5. Catalyzes the interconversion of 2-phosphoglycerate and 3-phosphoglycerate. In Chlorobaculum tepidum (strain ATCC 49652 / DSM 12025 / NBRC 103806 / TLS) (Chlorobium tepidum), this protein is 2,3-bisphosphoglycerate-dependent phosphoglycerate mutase.